Here is a 362-residue protein sequence, read N- to C-terminus: Severin (362 aa).

A Gelsolin-like 1 repeat occupies 53–102; the sequence is FKVVPVPESSYGKFYDGDSYIILHTFKEGNSLKHDIHFFLGTFTTQDEAG. Residue 162–170 coordinates a 1,2-diacyl-sn-glycero-3-phospho-(1D-myo-inositol-4,5-bisphosphate); it reads RLLHISGDK. Gelsolin-like repeat units lie at residues 172-212 and 280-323; these read AKVA…QEKN and LKFS…NEKK.

This sequence belongs to the villin/gelsolin family.

Functionally, severin blocks the ends of F-actin and causes the fragmentation and depolymerization of actin filaments in a Ca(2+) dependent manner. This chain is Severin (sevA), found in Dictyostelium discoideum (Social amoeba).